The sequence spans 137 residues: Probable glycine cleavage system H protein 1 (137 aa).

In terms of domain architecture, Lipoyl-binding spans 31–113; the sequence is VAVIGITDYA…YGEGWIFKLK (83 aa). At Lys72 the chain carries N6-lipoyllysine.

This sequence belongs to the GcvH family. In terms of assembly, the glycine cleavage system is composed of four proteins: P, T, L and H. (R)-lipoate serves as cofactor.

Its function is as follows. The glycine cleavage system catalyzes the degradation of glycine. The H protein shuttles the methylamine group of glycine from the P protein to the T protein. The chain is Probable glycine cleavage system H protein 1 from Saccharolobus solfataricus (strain ATCC 35092 / DSM 1617 / JCM 11322 / P2) (Sulfolobus solfataricus).